The primary structure comprises 99 residues: MSRRCELTGIGPMVGHNVSHSNIKTKRRFLPALSPATLQSESLGQSFKLRISNAALRTLDFKGGLDTFLLGAKDEQLSPRALKIKAQVKAKAKAAAQAA.

The protein belongs to the bacterial ribosomal protein bL28 family.

The polypeptide is Large ribosomal subunit protein bL28 (Caulobacter vibrioides (strain ATCC 19089 / CIP 103742 / CB 15) (Caulobacter crescentus)).